The following is a 573-amino-acid chain: MLDDDCSPTSSSEMSNASSREASITSRSSSTSGNNSLPEDRGAVVQLPTLNPSDYRWHPFPGDSSVLQRKAIGVEALVGIRDANSRGEYDFYNNIVLRVGNALELTLTRLKRAFVKAMLDARFENPSIACYGVWGQNKEQYLPHIQYKSFKSQSEALAWANNCIIIQATSLTGSELRAERLKKRRAQAVPQPSNPLDIIIYADVANQRNRLEPGTEVNILFLFNHLIWDGKGRYFTSELVQRATTILDQEKENIMPTHRWGEEKSRLDPPILDVMLVNLDKMGPDYDLAHRKLLNSQLQVGLSWGLPLTRNPGEPLQIRHCISREDSTKITDAVRARLGPKYNIGHLGHAATVLSLLKNNPIPPSTQDTAFLFSPLPVDGRPYLLEERKTPRYGNAQAAAVVELQKLASWGIKSDNLNGVKVALDDLAKKVKEDYDYWLTNLVAWRFKSSCTSEFIAFGSAIYQTPYLDPGAPKVKVGTGTSTDMVFLKAFCNDGRAESIIAYTMHGPSGKELFQVDDCFGGVDVLGSNAFIRMDTWKDAIRLTLCYNSGCFSDAVANSFTTDVAQYMLAYSW.

The disordered stretch occupies residues 1 to 40 (MLDDDCSPTSSSEMSNASSREASITSRSSSTSGNNSLPED). Residues 7–36 (SPTSSSEMSNASSREASITSRSSSTSGNNS) show a composition bias toward low complexity.

It belongs to the trichothecene O-acetyltransferase family.

It functions in the pathway mycotoxin biosynthesis. Putative 15-O-acetyltransferase; part of the satratoxin SC2 cluster involved in the biosynthesis of satratoxins, trichothecene mycotoxins that are associated with human food poisonings. Satratoxins are suggested to be made by products of multiple gene clusters (SC1, SC2 and SC3) that encode 21 proteins in all, including polyketide synthases, acetyltransferases, and other enzymes expected to modify the trichothecene skeleton. SC1 encodes 10 proteins, SAT1 to SAT10. The largest are SAT8, which encodes a putative polyketide synthase (PKS) with a conventional non-reducing architecture, and SAT10, a putative protein containing four ankyrin repeats and thus may be involved in protein scaffolding. The putative short-chain reductase SAT3 may assist the PKS in some capacity. SAT6 contains a secretory lipase domain and acts probably as a trichothecene esterase. SAT5 encodes a putative acetyltransferase, and so, with SAT6, may affect endogenous protection from toxicity. The probable transcription factor SAT9 may regulate the expression of the SC1 cluster. SC2 encodes proteins SAT11 to SAT16, the largest of which encodes the putative reducing PKS SAT13. SAT11 is a cytochrome P450 monooxygenase, while SAT14 and SAT16 are probable acetyltransferases. The SC2 cluster may be regulated by the transcription factor SAT15. SC3 is a small cluster that encodes 5 proteins, SAT17 to SAT21. SAT21 is a putative MFS-type transporter which may have a role in exporting secondary metabolites. The four other proteins putatively encoded in SC3 include the taurine hydroxylase-like protein SAT17, the O-methyltransferase SAT18, the acetyltransferase SAT19, and the Cys6-type zinc finger SAT20, the latter being probably involved in regulation of SC3 expression. This is Putative 15-O-acetyltransferase SAT12 from Stachybotrys chartarum (strain CBS 109288 / IBT 7711) (Toxic black mold).